Here is a 134-residue protein sequence, read N- to C-terminus: ATP synthase epsilon chain (134 aa).

This sequence belongs to the ATPase epsilon chain family. F-type ATPases have 2 components, CF(1) - the catalytic core - and CF(0) - the membrane proton channel. CF(1) has five subunits: alpha(3), beta(3), gamma(1), delta(1), epsilon(1). CF(0) has three main subunits: a, b and c.

Its subcellular location is the cell membrane. Produces ATP from ADP in the presence of a proton gradient across the membrane. In Staphylococcus aureus (strain USA300), this protein is ATP synthase epsilon chain.